Reading from the N-terminus, the 501-residue chain is Dipeptide and tripeptide permease A (501 aa).

Residues 1 to 21 (MSTANKKPTESVSLNAFKQPK) are Cytoplasmic-facing. A helical membrane pass occupies residues 22 to 44 (AFYLIFSIELWERFGYYGLQGIM). Residues 45–59 (AVYLVKQLGMSEADS) are Periplasmic-facing. Residues 60–80 (ITLFSSFSALVYGLVAIGGWL) traverse the membrane as a helical segment. At 81–89 (GDKILGTKR) the chain is on the cytoplasmic side. A helical membrane pass occupies residues 90-110 (VIMLGAVVLAIGYALVAWSGH). Aspartate 111 is a topological domain (periplasmic). The chain crosses the membrane as a helical span at residues 112 to 132 (AGIVYMGMAAIAVGNGLFKAN). The Cytoplasmic portion of the chain corresponds to 133-153 (PSSLLSTCYAKDDPRLDGAFT). Residues 154 to 174 (MYYMSVNIGSFFSMLATPWLA) form a helical membrane-spanning segment. Topologically, residues 175–178 (ARYG) are periplasmic. The chain crosses the membrane as a helical span at residues 179–199 (WSTAFALSVVGMLITVVNFAF). Over 200–219 (CQRWVKSYGSKPDFEPINFR) the chain is Cytoplasmic. Residues 220–240 (NLLLTIVGIVVLIAVATWLLH) traverse the membrane as a helical segment. At 241–246 (NQDIAR) the chain is on the periplasmic side. The chain crosses the membrane as a helical span at residues 247 to 267 (MVLGVIALGIVIIFGKEAFSM). Over 268 to 274 (HGAARRK) the chain is Cytoplasmic. A helical transmembrane segment spans residues 275–295 (MIVAFILMLQAIIFFVLYSQM). Residues 296–320 (PTSLNFFAIRNVEHSILGIAFEPEQ) are Periplasmic-facing. A helical transmembrane segment spans residues 321–341 (YQALNPFWIITGSPILAAIYN). Over 342 to 352 (RMGDTLPMPMK) the chain is Cytoplasmic. A helical transmembrane segment spans residues 353–373 (FAIGMVLCSGAFLILPLGAKF). The Periplasmic portion of the chain corresponds to 374 to 383 (ANDAGIVSVN). Residues 384 to 404 (WLIASYGLQSIGELMISGLGL) form a helical membrane-spanning segment. The Cytoplasmic segment spans residues 405–414 (AMVAQLVPQR). A helical membrane pass occupies residues 415-435 (LMGFIMGSWFLTTAGANIIGG). At 436–459 (YVANLMAVPSDVTDPLMSLEVYGR) the chain is on the periplasmic side. The helical transmembrane segment at 460-480 (VFMQIGIATAVIAVLMLLTAP) threads the bilayer. The Cytoplasmic segment spans residues 481-501 (KLNRMTQDDDTAEKGSKAATV).

Belongs to the major facilitator superfamily. Proton-dependent oligopeptide transporter (POT/PTR) (TC 2.A.17) family. DtpA subfamily.

It localises to the cell inner membrane. In terms of biological role, proton-dependent permease that transports di- and tripeptides. This is Dipeptide and tripeptide permease A from Salmonella typhi.